The primary structure comprises 449 residues: UDP-N-acetylmuramoylalanine--D-glutamate ligase (449 aa).

118–124 (GTNGKTT) is a binding site for ATP.

The protein belongs to the MurCDEF family.

It localises to the cytoplasm. It carries out the reaction UDP-N-acetyl-alpha-D-muramoyl-L-alanine + D-glutamate + ATP = UDP-N-acetyl-alpha-D-muramoyl-L-alanyl-D-glutamate + ADP + phosphate + H(+). It participates in cell wall biogenesis; peptidoglycan biosynthesis. Functionally, cell wall formation. Catalyzes the addition of glutamate to the nucleotide precursor UDP-N-acetylmuramoyl-L-alanine (UMA). The chain is UDP-N-acetylmuramoylalanine--D-glutamate ligase from Staphylococcus epidermidis (strain ATCC 12228 / FDA PCI 1200).